The chain runs to 511 residues: Glucans biosynthesis protein G (511 aa).

The first 22 residues, 1-22 (MMKMRWLGAAIMLTLYASSSWA), serve as a signal peptide directing secretion.

It belongs to the OpgD/OpgG family.

It is found in the periplasm. It functions in the pathway glycan metabolism; osmoregulated periplasmic glucan (OPG) biosynthesis. Involved in the biosynthesis of osmoregulated periplasmic glucans (OPGs). The polypeptide is Glucans biosynthesis protein G (Salmonella enteritidis PT4 (strain P125109)).